Consider the following 170-residue polypeptide: ATP synthase subunit b (170 aa).

Residues 30-50 traverse the membrane as a helical segment; that stretch reads FFFVLAIFLVVLGVIGTFVVP.

Belongs to the ATPase B chain family. In terms of assembly, F-type ATPases have 2 components, F(1) - the catalytic core - and F(0) - the membrane proton channel. F(1) has five subunits: alpha(3), beta(3), gamma(1), delta(1), epsilon(1). F(0) has three main subunits: a(1), b(2) and c(10-14). The alpha and beta chains form an alternating ring which encloses part of the gamma chain. F(1) is attached to F(0) by a central stalk formed by the gamma and epsilon chains, while a peripheral stalk is formed by the delta and b chains.

The protein localises to the cell membrane. Functionally, f(1)F(0) ATP synthase produces ATP from ADP in the presence of a proton or sodium gradient. F-type ATPases consist of two structural domains, F(1) containing the extramembraneous catalytic core and F(0) containing the membrane proton channel, linked together by a central stalk and a peripheral stalk. During catalysis, ATP synthesis in the catalytic domain of F(1) is coupled via a rotary mechanism of the central stalk subunits to proton translocation. Component of the F(0) channel, it forms part of the peripheral stalk, linking F(1) to F(0). In Mycobacterium leprae (strain TN), this protein is ATP synthase subunit b.